A 377-amino-acid polypeptide reads, in one-letter code: MLFHGIPGEHIQGIMEEMERRSKSESRLAKTVQMNGRETSMPSVSPEKPALCAGCGSKISDRYYLLAVDKQWHLRCLKCCECKLALESELTCFAKDGSIYCKEDYYRRFSVQRCARCHLGISASEMVMRARDSVYHLSCFTCTSCNKTLTTGDHFGMRENLVYCRAHFESLVQGEYHAPLNYAELAAKGGGLALPYFNGASAVQKGRPRKRKSPAMGIDINTYNSGCNENDADHLDRDQQPYPPSQKTKXMRTSFKHHQLRTMKSYFAINHNPDAKDLKQLAQKTGLTKRVLQVWFQNARAKFRRNVLRQENGGVDKADGTSLPPPSSDSGALTPPSTATTLTDLTNPSITVVTSVTSSLDSHDSGSPPQTTLTNLF.

2 consecutive LIM zinc-binding domains span residues 50–111 (ALCA…RFSV) and 112–174 (QRCA…LVQG). Disordered stretches follow at residues 228-249 (NENDADHLDRDQQPYPPSQKTK), 309-346 (RQENGGVDKADGTSLPPPSSDSGALTPPSTATTLTDLT), and 358-377 (SSLDSHDSGSPPQTTLTNLF). Residues 248 to 307 (TKXMRTSFKHHQLRTMKSYFAINHNPDAKDLKQLAQKTGLTKRVLQVWFQNARAKFRRNV) constitute a DNA-binding region (homeobox). Positions 333 to 346 (LTPPSTATTLTDLT) are enriched in low complexity. Over residues 365–377 (SGSPPQTTLTNLF) the composition is skewed to polar residues.

The protein localises to the nucleus. May be involved in gonadal development. This is LIM/homeobox protein Lhx9 (lhx9) from Psalidodon fasciatus (Banded astyanax).